We begin with the raw amino-acid sequence, 297 residues long: Acetylglutamate kinase (297 aa).

Substrate-binding positions include 70 to 71 (GG), R92, and N194.

It belongs to the acetylglutamate kinase family. ArgB subfamily.

The protein resides in the cytoplasm. It catalyses the reaction N-acetyl-L-glutamate + ATP = N-acetyl-L-glutamyl 5-phosphate + ADP. It participates in amino-acid biosynthesis; L-arginine biosynthesis; N(2)-acetyl-L-ornithine from L-glutamate: step 2/4. Catalyzes the ATP-dependent phosphorylation of N-acetyl-L-glutamate. This is Acetylglutamate kinase from Janthinobacterium sp. (strain Marseille) (Minibacterium massiliensis).